A 189-amino-acid polypeptide reads, in one-letter code: Autophagy receptor ATG45 (189 aa).

A binds glycogen region spans residues 1–96; sequence MSNFLLVIPE…TNNILHFKDN (96 aa). The interval 97–189 is required for sequestration into autophagosomes; that stretch reads EASQLMDIPL…AKKVKTYWNK (93 aa). A Phosphoserine modification is found at serine 107. Positions 127–130 match the ATG8 interaction motif (AIM) motif; that stretch reads YVNL. At serine 172 the chain carries Phosphoserine. Positions 176–187 are may facilitate interactions with the autophagosome membrane; the sequence is LMCIAKKVKTYW.

As to quaternary structure, interacts with ATG8.

It is found in the cytoplasm. The protein resides in the cytosol. The protein localises to the cytoplasmic vesicle. It localises to the autophagosome. Functionally, autophagy receptor for glycogen that facilitates the sequestration of glycogen assemblies into autophagosomes as part of bulk autophagy; the autophagy of glycogen (glycophagy) is stimulated during prolonged nitrogen starvation and during sporulation. This is Autophagy receptor ATG45 from Saccharomyces cerevisiae (strain ATCC 204508 / S288c) (Baker's yeast).